The sequence spans 474 residues: UDP-N-acetylmuramate--L-alanine ligase (474 aa).

119 to 125 (GTHGKTT) is an ATP binding site.

It belongs to the MurCDEF family.

The protein resides in the cytoplasm. It catalyses the reaction UDP-N-acetyl-alpha-D-muramate + L-alanine + ATP = UDP-N-acetyl-alpha-D-muramoyl-L-alanine + ADP + phosphate + H(+). It functions in the pathway cell wall biogenesis; peptidoglycan biosynthesis. Functionally, cell wall formation. In Jannaschia sp. (strain CCS1), this protein is UDP-N-acetylmuramate--L-alanine ligase.